A 137-amino-acid chain; its full sequence is ATP synthase epsilon chain (137 aa).

The protein belongs to the ATPase epsilon chain family. As to quaternary structure, F-type ATPases have 2 components, CF(1) - the catalytic core - and CF(0) - the membrane proton channel. CF(1) has five subunits: alpha(3), beta(3), gamma(1), delta(1), epsilon(1). CF(0) has three main subunits: a, b and c.

The protein localises to the cell inner membrane. Functionally, produces ATP from ADP in the presence of a proton gradient across the membrane. The polypeptide is ATP synthase epsilon chain (Yersinia pestis bv. Antiqua (strain Antiqua)).